We begin with the raw amino-acid sequence, 261 residues long: tRNA U34 carboxymethyltransferase (261 aa).

Residues Lys-25, Trp-39, Lys-44, Gly-63, Val-114–Glu-115, Tyr-135, and Arg-250 each bind carboxy-S-adenosyl-L-methionine.

It belongs to the class I-like SAM-binding methyltransferase superfamily. CmoB family. Homotetramer.

The catalysed reaction is carboxy-S-adenosyl-L-methionine + 5-hydroxyuridine(34) in tRNA = 5-carboxymethoxyuridine(34) in tRNA + S-adenosyl-L-homocysteine + H(+). Its function is as follows. Catalyzes carboxymethyl transfer from carboxy-S-adenosyl-L-methionine (Cx-SAM) to 5-hydroxyuridine (ho5U) to form 5-carboxymethoxyuridine (cmo5U) at position 34 in tRNAs. In Helicobacter pylori (strain Shi470), this protein is tRNA U34 carboxymethyltransferase.